A 295-amino-acid chain; its full sequence is ATP synthase gamma chain (295 aa).

This sequence belongs to the ATPase gamma chain family. In terms of assembly, F-type ATPases have 2 components, CF(1) - the catalytic core - and CF(0) - the membrane proton channel. CF(1) has five subunits: alpha(3), beta(3), gamma(1), delta(1), epsilon(1). CF(0) has three main subunits: a, b and c.

The protein localises to the cell inner membrane. Produces ATP from ADP in the presence of a proton gradient across the membrane. The gamma chain is believed to be important in regulating ATPase activity and the flow of protons through the CF(0) complex. In Methylorubrum populi (strain ATCC BAA-705 / NCIMB 13946 / BJ001) (Methylobacterium populi), this protein is ATP synthase gamma chain.